A 37-amino-acid chain; its full sequence is Antifungal protein 4 (37 aa).

Its subcellular location is the secreted. Functionally, possesses antifungal activity against P.infestans but not F.graminearum. This is Antifungal protein 4 from Malva parviflora (Little mallow).